The sequence spans 93 residues: Small ribosomal subunit protein uS19 (93 aa).

It belongs to the universal ribosomal protein uS19 family.

In terms of biological role, protein S19 forms a complex with S13 that binds strongly to the 16S ribosomal RNA. This Desulfitobacterium hafniense (strain Y51) protein is Small ribosomal subunit protein uS19.